The sequence spans 190 residues: dTTP/UTP pyrophosphatase (190 aa).

The Proton acceptor role is filled by Asp-68.

The protein belongs to the Maf family. YhdE subfamily. Requires a divalent metal cation as cofactor.

It is found in the cytoplasm. It catalyses the reaction dTTP + H2O = dTMP + diphosphate + H(+). The enzyme catalyses UTP + H2O = UMP + diphosphate + H(+). Functionally, nucleoside triphosphate pyrophosphatase that hydrolyzes dTTP and UTP. May have a dual role in cell division arrest and in preventing the incorporation of modified nucleotides into cellular nucleic acids. This Pyrococcus furiosus (strain ATCC 43587 / DSM 3638 / JCM 8422 / Vc1) protein is dTTP/UTP pyrophosphatase.